The following is a 266-amino-acid chain: Putative transmembrane ascorbate-dependent reductase CYB561 homolog (266 aa).

The Cytoplasmic segment spans residues 1-22; it reads MSLLFDPGFVILREDQSVKLFN. The helical transmembrane segment at 23–43 threads the bilayer; that stretch reads IILVMSQVFGGLAVLLVTIWM. One can recognise a Cytochrome b561 domain in the interval 27–240; that stretch reads MSQVFGGLAV…YTVCVLLLVL (214 aa). The Vesicular segment spans residues 44 to 61; it reads SKFESGFAWNEDPDKEFN. A helical transmembrane segment spans residues 62 to 82; it reads YHPTFMIMGMVFLFGEALLVY. Residues His63, Arg83, and Lys90 each contribute to the heme b site. Residues 83 to 95 lie on the Cytoplasmic side of the membrane; it reads RVFRNERKKFSKT. Residues Lys90 and Lys94 each coordinate L-ascorbate. The helical transmembrane segment at 96–116 threads the bilayer; the sequence is LHVILHSCVLVFMLMALKAVF. Residues His97, 134–137, and His139 contribute to the heme b site; that span reads NLVS. Over 117–141 the chain is Vesicular; the sequence is DYHNLHKDPSGNPAPIVNLVSLHSW. A helical membrane pass occupies residues 142–162; that stretch reads IGLSVVILYFAQYIVGFITYF. Over 163–176 the chain is Cytoplasmic; the sequence is FPGMPIPIRQLVMP. Arg171 serves as a coordination point for L-ascorbate. A helical transmembrane segment spans residues 177–197; it reads FHQMFGVLIFIFVSITVAMGI. Residues His178 and Glu199 each contribute to the heme b site. Residues 198–219 lie on the Vesicular side of the membrane; it reads SERAAWKHTCWTKEGQMCAQQA. Residues 220–240 form a helical membrane-spanning segment; the sequence is TSSFVGVFTFLYTVCVLLLVL. Over 241–266 the chain is Cytoplasmic; that stretch reads NPRWKRQSLPEEEGLHHLTSSHSMSD. Lys245 is a heme b binding site.

Requires heme b as cofactor.

The protein localises to the membrane. The enzyme catalyses monodehydro-L-ascorbate radical(out) + L-ascorbate(in) = monodehydro-L-ascorbate radical(in) + L-ascorbate(out). Its function is as follows. Putative transmembrane reductase that uses ascorbate as an electron donor in the cytoplasm and transfers electrons across membranes to reduce monodehydro-L-ascorbate radical in the lumen of secretory vesicles. This chain is Putative transmembrane ascorbate-dependent reductase CYB561 homolog, found in Caenorhabditis elegans.